The following is a 348-amino-acid chain: Anthranilate phosphoribosyltransferase (348 aa).

5-phospho-alpha-D-ribose 1-diphosphate is bound by residues Gly89, 92 to 93 (GD), Thr97, 99 to 102 (NIST), 117 to 125 (KHGNRSVSS), and Ser129. Gly89 contacts anthranilate. A Mg(2+)-binding site is contributed by Ser101. Asn120 serves as a coordination point for anthranilate. Position 175 (Arg175) interacts with anthranilate. Mg(2+)-binding residues include Asp233 and Glu234.

This sequence belongs to the anthranilate phosphoribosyltransferase family. As to quaternary structure, homodimer. Mg(2+) serves as cofactor.

It carries out the reaction N-(5-phospho-beta-D-ribosyl)anthranilate + diphosphate = 5-phospho-alpha-D-ribose 1-diphosphate + anthranilate. Its pathway is amino-acid biosynthesis; L-tryptophan biosynthesis; L-tryptophan from chorismate: step 2/5. Functionally, catalyzes the transfer of the phosphoribosyl group of 5-phosphorylribose-1-pyrophosphate (PRPP) to anthranilate to yield N-(5'-phosphoribosyl)-anthranilate (PRA). This is Anthranilate phosphoribosyltransferase from Shewanella sp. (strain W3-18-1).